The chain runs to 173 residues: Mediator of RNA polymerase II transcription subunit 10 (173 aa).

Residues 1–10 (MVQQQQQSQQ) show a composition bias toward low complexity. A disordered region spans residues 1–42 (MVQQQQQSQQRMMELHERNDREKLARKTEKEREEERRKQEDD). Positions 13–42 (MELHERNDREKLARKTEKEREEERRKQEDD) are enriched in basic and acidic residues.

It belongs to the Mediator complex subunit 10 family. In terms of assembly, component of the Mediator complex.

Its subcellular location is the nucleus. In terms of biological role, component of the Mediator complex, a coactivator involved in the regulated transcription of nearly all RNA polymerase II-dependent genes. Mediator functions as a bridge to convey information from gene-specific regulatory proteins to the basal RNA polymerase II transcription machinery. Mediator is recruited to promoters by direct interactions with regulatory proteins and serves as a scaffold for the assembly of a functional preinitiation complex with RNA polymerase II and the general transcription factors. Required for germ cell development and for transcriptional activation of certain stage-specific inducible promoters. In Caenorhabditis elegans, this protein is Mediator of RNA polymerase II transcription subunit 10 (mdt-10).